A 232-amino-acid chain; its full sequence is Ribonuclease 3 (232 aa).

The region spanning 7-135 is the RNase III domain; sequence IQAVESKLKF…ILGAVYLDGG (129 aa). Glu48 is a Mg(2+) binding site. Residue Asp52 is part of the active site. Mg(2+) is bound by residues Asn121 and Glu124. Glu124 is an active-site residue. The DRBM domain maps to 160-229; the sequence is NPKNRLQQFT…AKQALSTHDD (70 aa).

The protein belongs to the ribonuclease III family. Homodimer. Mg(2+) serves as cofactor.

Its subcellular location is the cytoplasm. The enzyme catalyses Endonucleolytic cleavage to 5'-phosphomonoester.. Digests double-stranded RNA. Involved in the processing of primary rRNA transcript to yield the immediate precursors to the large and small rRNAs (23S and 16S). Processes some mRNAs, and tRNAs when they are encoded in the rRNA operon. Processes pre-crRNA and tracrRNA of type II CRISPR loci if present in the organism. The sequence is that of Ribonuclease 3 from Chlamydia muridarum (strain MoPn / Nigg).